A 447-amino-acid chain; its full sequence is ATP-dependent 6-phosphofructokinase (447 aa).

ATP is bound by residues Gly88, 154–155, and 179–182; these read RG and GDGT. Asp180 serves as a coordination point for Mg(2+). Substrate is bound by residues 208–210, 253–255, Glu315, and 368–371; these read TVD, MGR, and YIIR. Asp210 (proton acceptor) is an active-site residue.

It belongs to the phosphofructokinase type A (PFKA) family. PPi-dependent PFK group II subfamily. Atypical ATP-dependent clade 'X' sub-subfamily. Homodimer. Mg(2+) is required as a cofactor.

It localises to the cytoplasm. It catalyses the reaction beta-D-fructose 6-phosphate + ATP = beta-D-fructose 1,6-bisphosphate + ADP + H(+). Its pathway is carbohydrate degradation; glycolysis; D-glyceraldehyde 3-phosphate and glycerone phosphate from D-glucose: step 3/4. Functionally, catalyzes the phosphorylation of D-fructose 6-phosphate to fructose 1,6-bisphosphate by ATP, the first committing step of glycolysis. The chain is ATP-dependent 6-phosphofructokinase from Borreliella burgdorferi (strain ATCC 35210 / DSM 4680 / CIP 102532 / B31) (Borrelia burgdorferi).